A 308-amino-acid polypeptide reads, in one-letter code: Glutaminase (308 aa).

Substrate contacts are provided by Ser66, Asn117, Glu161, Asn168, Tyr192, Tyr244, and Val262.

It belongs to the glutaminase family. Homotetramer.

It carries out the reaction L-glutamine + H2O = L-glutamate + NH4(+). The chain is Glutaminase from Yersinia pestis bv. Antiqua (strain Nepal516).